We begin with the raw amino-acid sequence, 239 residues long: Putative CRISPR-associated endoribonuclease-like protein Cas6nc (239 aa).

This sequence belongs to the CRISPR-associated protein Cas6/Cse3/CasE family. In terms of assembly, monomer; homodimer when crystallized in the presence of crRNA. Varying the crRNA sequence varies degree of oligomerization and structure.

Functionally, CRISPR (clustered regularly interspaced short palindromic repeat), is an adaptive immune system that provides protection against mobile genetic elements (viruses, transposable elements and conjugative plasmids). CRISPR clusters contain sequences complementary to antecedent mobile elements and target invading nucleic acids. CRISPR clusters are transcribed and processed into CRISPR RNA (crRNA), also called psiRNA (prokaryotic silencing) in this organism (Potential). This is Putative CRISPR-associated endoribonuclease-like protein Cas6nc (cas6nc) from Pyrococcus horikoshii (strain ATCC 700860 / DSM 12428 / JCM 9974 / NBRC 100139 / OT-3).